Consider the following 1492-residue polypeptide: MQRSPIEKANAFSKLFFRWPRPILKKGYRQKLELSDIYQIPSSDSADELSEMLEREWDRELATSKKNPKLVNALRRCFFWRFLFYGILLYFVEFTKAVQPLCLGRIIASYNAKNTYEREIAYYLALGLCLLFVVRTLFLHPAVFGLQHLGMQMRIALFSLIYKKILKMSSRVLDKIDTGQLVSLLSNNLNKFDEGVAVAHFVWIAPVQVVLLMGLIWNELTEFVFCGLGFLIMLALFQAWLGKKMMQYRDKRAGKINERLAITSEIIDNIQSVKVYCWEDAMEKIIDDIRQVELKLTRKVAYCRYFSSSAFFFSGFFVVFLSVVPYAFIHTIKLRRIFTTISYNIVLRMTVTRQFPSAIQTWYDSLGAIRKIQDFLHKDEHKTVEYNLTTKEVEMVNVTASWDEGIGELFEKVKQNDSERKMANGDDGLFFSNFSLHVTPVLKNISFKLEKGELLAIAGSTGSGKSSLLMMIMGELEPSDGKIKHSGRISYSPQVPWIMPGTIKDNIIFGLSYDEYRYTSVVNACQLEEDITVFPNKDKTVLGDGGITLSGGQRARISLARALYKDADLYLLDSPFSHLDVTTEKDIFESCLCKLMVNKTRILVTSKLEHLKKADKILLLHEGHCYFYGTFSELQGEKPDFSSQLLGSVHFDSFSAERRNSILTETFRRCSVSSGDGAGLGSYSETRKASFKQPPPEFNEKRKSSLIVNPITSNKKFSLVQTAMSYPQTNGMEDATSEPGERHFSLIPENELGEPTKPRSNIFKSELPFQAHRRQSVLALMTHSSTSPNKIHARRSAVRKMSMLSQTNFASSEIDIYSRRLSEDGSFEISEEINEEDLKECFADEEEIQNVTTTWSTYLRYVTTNRNLVFVLILCLVIFLAEVAASLAGLWIISGLAINTGSQTNDTSTDLSHLSVFSKFITNGSHYYIFYIYVGLADSFLALGVIRGLPLVHTLVTVSKDLHKQMLHSVLQGPMTAFNKMKAGRILNRFIKDTAIIDDMLPLTVFDFVQLILIVVGAICVVSVLQPYTLLAAIPVAVIFIMLRAYFLRTSQQLKQLESEARSPIFSHLITSLRGLWTVRAFGRQSYFETLFHKALNLHTANWFLYLSTLRWFQMRIDIVFVLFFIAVTFIAIATHDVGEGQVGIILTLAMNITSTLQWAVNSSIDVDGLMRSVSRVFKYIDIPPEGSETKNRHNANNPSDVLVIENKHLTKEWPSGGQMMVNNLTAKYTSDGRAVLQDLSFSVNAGQRVGLLGRTGAGKSTLLSALLRLLSTEGEIQIDGISWNSVSLQKWRKAFGVIPQKVFVFSGTFRKNLDPYEQWSDEEIWKVTEEVGLKSMIEQFPDKLNFVLVDGGYILSNGHKQLMCLARSILSKAKILLLDEPTAHLDPVTFQIIRKTLKHTFSNCTVILSEHRVEALLECQQFLVIEGCSVKQFDALQKLLTEASLFKQVFGHLDRAKLFTAHRRNSSKRKTRPKISALQEEAEEDLQETRL.

Residues Met1–Phe78 are Cytoplasmic-facing. Residues Phe79–Gln99 traverse the membrane as a helical segment. The 285-residue stretch at Phe82–Leu366 folds into the ABC transmembrane type-1 1 domain. Topologically, residues Pro100–Tyr123 are extracellular. A helical membrane pass occupies residues Leu124 to Gln147. Topologically, residues His148–Val196 are cytoplasmic. A helical membrane pass occupies residues Ala197–Trp217. The Extracellular segment spans residues Asn218–Phe223. A helical membrane pass occupies residues Val224–Lys244. Over Met245 to Lys299 the chain is Cytoplasmic. Residues Val300–Phe320 traverse the membrane as a helical segment. The Extracellular portion of the chain corresponds to Leu321–Thr340. Residues Ile341–Ile359 traverse the membrane as a helical segment. The Cytoplasmic segment spans residues Gln360–Asn867. Residues Trp402, Ser435, Gly459–Ser466, and Gln494 each bind ATP. Residues Asn424 to Gly647 form the ABC transporter 1 domain. Residues Ser655–Glu840 form a disordered R region region. A helical membrane pass occupies residues Leu868–Ala888. Positions Leu868 to Gly1169 constitute an ABC transmembrane type-1 2 domain. At Gly889–Ile932 the chain is on the extracellular side. Asn905 and Asn923 each carry an N-linked (GlcNAc...) asparagine glycan. A discontinuously helical transmembrane segment spans residues Tyr933 to His953. Topologically, residues Thr954–Thr1004 are cytoplasmic. A helical transmembrane segment spans residues Val1005 to Leu1025. Topologically, residues Gln1026 to Pro1027 are extracellular. Residues Tyr1028 to Leu1048 form a helical membrane-spanning segment. Residues Arg1049–Thr1109 are Cytoplasmic-facing. The helical transmembrane segment at Leu1110–Phe1130 threads the bilayer. Residues Ile1131–Gly1144 lie on the Extracellular side of the membrane. A helical transmembrane segment spans residues Ile1145 to Ile1165. Over Asp1166–Leu1492 the chain is Cytoplasmic. The ABC transporter 2 domain maps to Met1220–His1453. ATP-binding positions include Tyr1229 and Gly1254–Ser1261. Basic residues predominate over residues Arg1465–Pro1474. The interval Arg1465–Leu1492 is disordered. The span at Glu1481–Leu1492 shows a compositional bias: acidic residues. The short motif at Ala1483–Glu1485 is the PDZ-binding element.

This sequence belongs to the ABC transporter superfamily. ABCC family. CFTR transporter (TC 3.A.1.202) subfamily. As to quaternary structure, monomer; does not require oligomerization for channel activity. May form oligomers in the membrane. Post-translationally, phosphorylated; cAMP treatment promotes phosphorylation and activates the channel. Dephosphorylation decreases the ATPase activity (in vitro). Phosphorylation at PKA sites activates the channel. Phosphorylation at PKC sites enhances the response to phosphorylation by PKA. In terms of tissue distribution, expressed in the rectal gland (at protein level).

The protein localises to the apical cell membrane. The protein resides in the early endosome membrane. It is found in the cell membrane. It localises to the recycling endosome membrane. Its subcellular location is the endoplasmic reticulum membrane. The catalysed reaction is ATP + H2O + closed Cl(-) channel = ADP + phosphate + open Cl(-) channel.. It carries out the reaction chloride(in) = chloride(out). The enzyme catalyses hydrogencarbonate(in) = hydrogencarbonate(out). It catalyses the reaction ATP + H2O = ADP + phosphate + H(+). Epithelial ion channel that plays an important role in the regulation of epithelial ion and water transport and fluid homeostasis. Mediates the transport of chloride ions across the cell membrane. Possesses an intrinsic ATPase activity and utilizes ATP to gate its channel; the passive flow of anions through the channel is gated by cycles of ATP binding and hydrolysis by the ATP-binding domains. The ion channel is also permeable to HCO(3)(-); selectivity depends on the extracellular chloride concentration. Exerts its function also by modulating the activity of other ion channels and transporters. Contributes to the regulation of the pH and the ion content of the epithelial fluid layer. In Squalus acanthias (Spiny dogfish), this protein is Cystic fibrosis transmembrane conductance regulator.